Consider the following 93-residue polypeptide: UPF0521 protein B (93 aa).

Residues 2–58 (SLKEVITSLKNDFHSINKEIDSMKENNEKQEEKIFQEIKKLKLEMELLRKDNLSFKT) adopt a coiled-coil conformation.

This sequence belongs to the UPF0521 family.

This is UPF0521 protein B from Dictyostelium discoideum (Social amoeba).